We begin with the raw amino-acid sequence, 259 residues long: Aspartate/glutamate leucyltransferase (259 aa).

Belongs to the R-transferase family. Bpt subfamily.

It is found in the cytoplasm. The catalysed reaction is N-terminal L-glutamyl-[protein] + L-leucyl-tRNA(Leu) = N-terminal L-leucyl-L-glutamyl-[protein] + tRNA(Leu) + H(+). It catalyses the reaction N-terminal L-aspartyl-[protein] + L-leucyl-tRNA(Leu) = N-terminal L-leucyl-L-aspartyl-[protein] + tRNA(Leu) + H(+). Its function is as follows. Functions in the N-end rule pathway of protein degradation where it conjugates Leu from its aminoacyl-tRNA to the N-termini of proteins containing an N-terminal aspartate or glutamate. The sequence is that of Aspartate/glutamate leucyltransferase from Rhizobium meliloti (strain 1021) (Ensifer meliloti).